Consider the following 468-residue polypeptide: UDP-N-acetylmuramate--L-alanine ligase (468 aa).

112 to 118 (GMHGKTT) contacts ATP.

Belongs to the MurCDEF family.

It localises to the cytoplasm. It carries out the reaction UDP-N-acetyl-alpha-D-muramate + L-alanine + ATP = UDP-N-acetyl-alpha-D-muramoyl-L-alanine + ADP + phosphate + H(+). The protein operates within cell wall biogenesis; peptidoglycan biosynthesis. Its function is as follows. Cell wall formation. This is UDP-N-acetylmuramate--L-alanine ligase from Koribacter versatilis (strain Ellin345).